The primary structure comprises 843 residues: Tetratricopeptide repeat protein 7B (843 aa).

The stretch at 97–131 (QESNLIMAKLNYVEGDYKEALNIYARVGLDDLPLT) is one TPR 1 repeat. 2 positions are modified to phosphoserine: Ser-160 and Ser-202. 6 TPR repeats span residues 219–252 (ETGL…VETR), 363–396 (SVVY…AFEE), 397–430 (FHLW…KPDD), 479–514 (TYSL…SPTD), 516–548 (QAAF…QGDD), and 549–582 (ANSL…YPEN). Phosphoserine is present on residues Ser-625, Ser-629, Ser-630, Ser-673, Ser-677, Ser-678, and Ser-681. TPR repeat units lie at residues 696 to 729 (AQIW…FPMS), 730 to 763 (HNVL…SPTH), 765 to 797 (KSMQ…NSTA), and 798 to 831 (HEVW…EASS).

In terms of assembly, component of a phosphatidylinositol 4-kinase (PI4K) complex, composed of PI4KA, EFR3 (EFR3A or EFR3B), TTC7 (TTC7A or TTC7B) and HYCC (HYCC1 or HYCC2). Interacts with PI4KA, interaction is direct. Interacts with EFR3 (EFR3A or EFR3B), interaction is direct. Interacts with HYCC (HYCC1 or HYCC2), interaction is direct. Association with the PI4K complex is strongly reduced by TMEM150A.

The protein localises to the cytoplasm. The protein resides in the cytosol. Its subcellular location is the cell membrane. Functionally, component of a complex required to localize phosphatidylinositol 4-kinase (PI4K) to the plasma membrane. The complex acts as a regulator of phosphatidylinositol 4-phosphate (PtdIns(4)P) synthesis. In the complex, plays a central role in bridging PI4KA to EFR3B and HYCC1, via direct interactions. The protein is Tetratricopeptide repeat protein 7B (TTC7B) of Homo sapiens (Human).